Consider the following 282-residue polypeptide: Nucleotide-binding protein ABO_0549 (282 aa).

8 to 15 (GRSGSGKT) is a binding site for ATP. Position 59–62 (59–62 (DARN)) interacts with GTP.

It belongs to the RapZ-like family.

In terms of biological role, displays ATPase and GTPase activities. The sequence is that of Nucleotide-binding protein ABO_0549 from Alcanivorax borkumensis (strain ATCC 700651 / DSM 11573 / NCIMB 13689 / SK2).